The following is a 1406-amino-acid chain: MALKNINYLLIFYLSFSLLIYIKNSFCNKNNTRCLSNSCQNNSTCKDFSKDNDCSCSDTANNLDKDCDNMKDPCFSNPCQGSATCVNTPGERSFLCKCPPGYSGTICETTIGSCGKNSCQHGGICHQDPIYPVCICPAGYAGRFCEIDHDECASSPCQNGAVCQDGIDGYSCFCVPGYQGRHCDLEVDECASDPCKNEATCLNEIGRYTCICPHNYSGVNCELEIDECWSQPCLNGATCQDALGAYFCDCAPGFLGDHCELNTDECASQPCLHGGLCVDGENRYSCNCTGSGFTGTHCETLMPLCWSKPCHNNATCEDSVDNYTCHCWPGYTGAQCEIDLNECNSNPCQSNGECVELSSEKQYGRITGLPSSFSYHEASGYVCICQPGFTGIHCEEDVNECSSNPCQNGGTCENLPGNYTCHCPFDNLSRTFYGGRDCSDILLGCTHQQCLNNGTCIPHFQDGQHGFSCLCPSGYTGSLCEIATTLSFEGDGFLWVKSGSVTTKGSVCNIALRFQTVQPMALLLFRSNRDVFVKLELLSGYIHLSIQVNNQSKVLLFISHNTSDGEWHFVEVIFAEAVTLTLIDDSCKEKCIAKAPTPLESDQSICAFQNSFLGGLPVGMTSNGVALLNFYNMPSTPSFVGCLQDIKIDWNHITLENISSGSSLNVKAGCVRKDWCESQPCQSRGRCINLWLSYQCDCHRPYEGPNCLREYVAGRFGQDDSTGYVIFTLDESYGDTISLSMFVRTLQPSGLLLALENSTYQYIRVWLERGRLAMLTPNSPKLVVKFVLNDGNVHLISLKIKPYKIELYQSSQNLGFISASTWKIEKGDVIYIGGLPDKQETELNGGFFKGCIQDVRLNNQNLEFFPNPTNNASLNPVLVNVTQGCAGDNSCKSNPCHNGGVCHSRWDDFSCSCPALTSGKACEEVQWCGFSPCPHGAQCQPVLQGFECIANAVFNGQSGQILFRSNGNITRELTNITFGFRTRDANVIILHAEKEPEFLNISIQDSRLFFQLQSGNSFYMLSLTSLQSVNDGTWHEVTLSMTDPLSQTSRWQMEVDNETPFVTSTIATGSLNFLKDNTDIYVGDRAIDNIKGLQGCLSTIEIGGIYLSYFENVHGFINKPQEEQFLKISTNSVVTGCLQLNVCNSNPCLHGGNCEDIYSSYHCSCPLGWSGKHCELNIDECFSNPCIHGNCSDRVAAYHCTCEPGYTGVNCEVDIDNCQSHQCANGATCISHTNGYSCLCFGNFTGKFCRQSRLPSTVCGNEKTNLTCYNGGNCTEFQTELKCMCRPGFTGEWCEKDIDECASDPCVNGGLCQDLLNKFQCLCDVAFAGERCEVDLADDLISDIFTTIGSVTVALLLILLLAIVASVVTSNKRATQGTYSPSRQEKEGSRVEMWNLMPPPAMERLI.

Residues Met1–Ser25 form the signal peptide. Over Phe26–Thr1347 the chain is Extracellular. 3 N-linked (GlcNAc...) asparagine glycosylation sites follow: Asn30, Asn41, and Asn42. EGF-like domains follow at residues Asn30–Asp68, Met70–Glu108, and Thr110–Glu146. Cystine bridges form between Cys34–Cys45, Cys39–Cys54, Cys56–Cys67, Cys74–Cys85, Cys79–Cys96, Cys98–Cys107, Cys114–Cys125, Cys119–Cys134, Cys136–Cys145, Cys152–Cys163, Cys157–Cys172, Cys174–Cys183, Cys190–Cys201, Cys195–Cys210, Cys212–Cys221, Cys228–Cys239, Cys233–Cys248, Cys250–Cys259, Cys266–Cys277, and Cys271–Cys286. The EGF-like 4; calcium-binding domain maps to Asp148 to Asp184. Residues Glu186–Glu222 form the EGF-like 5; calcium-binding domain. Residue Asn215 is glycosylated (N-linked (GlcNAc...) asparagine). Residues Glu224–Glu260 enclose the EGF-like 6; calcium-binding domain. The EGF-like 7; calcium-binding domain occupies Asn262–Glu299. Asn287 carries an N-linked (GlcNAc...) asparagine glycan. Cystine bridges form between Cys288/Cys298, Cys305/Cys316, Cys310/Cys325, Cys327/Cys336, Cys343/Cys354, Cys348/Cys383, Cys385/Cys394, Cys401/Cys412, Cys406/Cys421, Cys423/Cys438, Cys445/Cys456, Cys450/Cys469, and Cys471/Cys480. 2 consecutive EGF-like domains span residues Leu301–Glu337 and Asp339–Glu395. 2 N-linked (GlcNAc...) asparagine glycosylation sites follow: Asn313 and Asn322. Positions Asp397–Ser439 constitute an EGF-like 10; calcium-binding domain. N-linked (GlcNAc...) asparagine glycans are attached at residues Asn418, Asn427, and Asn453. Residues Ile441–Glu481 enclose the EGF-like 11 domain. In terms of domain architecture, Laminin G-like 1 spans Thr485–Cys670. Asn550, Asn561, and Asn657 each carry an N-linked (GlcNAc...) asparagine glycan. Intrachain disulfides connect Cys642–Cys670, Cys676–Cys687, Cys681–Cys696, and Cys698–Cys707. Positions Arg672–Leu708 constitute an EGF-like 12 domain. Positions Gly714 to Cys885 constitute a Laminin G-like 2 domain. Asn757, Asn871, and Asn880 each carry an N-linked (GlcNAc...) asparagine glycan. 6 disulfide bridges follow: Cys851–Cys885, Cys891–Cys902, Cys896–Cys911, Cys913–Cys922, Cys928–Cys939, and Cys933–Cys948. EGF-like domains are found at residues Gly887–Glu923 and Glu924–Gln960. In terms of domain architecture, Laminin G-like 3 spans Ala950–Cys1137. N-linked (GlcNAc...) asparagine glycans are attached at residues Asn968, Asn975, and Asn1000. Cystine bridges form between Cys1096/Cys1137, Cys1143/Cys1154, Cys1148/Cys1163, Cys1165/Cys1174, Cys1181/Cys1191, Cys1186/Cys1200, Cys1202/Cys1211, Cys1218/Cys1229, Cys1223/Cys1238, Cys1240/Cys1249, Cys1259/Cys1274, Cys1268/Cys1283, Cys1285/Cys1294, Cys1301/Cys1312, Cys1306/Cys1321, and Cys1323/Cys1332. An EGF-like 15 domain is found at Gln1139 to Glu1175. An EGF-like 16; calcium-binding domain is found at Asn1177–Glu1212. Asn1190 carries an N-linked (GlcNAc...) asparagine glycan. EGF-like domains follow at residues Asp1214–Arg1250 and Pro1255–Glu1295. Asn1243, Asn1265, and Asn1273 each carry an N-linked (GlcNAc...) asparagine glycan. The region spanning Asp1297 to Glu1333 is the EGF-like 19; calcium-binding domain. A helical transmembrane segment spans residues Ile1348–Val1368. The Cytoplasmic portion of the chain corresponds to Thr1369–Ile1406. An interaction with EPB41L5 region spans residues Ser1370–Ile1406.

This sequence belongs to the Crumbs protein family. As to quaternary structure, component of a complex composed of PALS1, CRB1 and EPB41L5. Within the complex, interacts (via intracellular domain) with PALS1 and EPB41L5 (via FERM domain). Forms a complex with MPP4 and PALS1. Interacts with MPDZ/MUPP1 and MPP4. Post-translationally, extensively glycosylated. As to expression, preferential expression in retina, also expressed in brain, testis, fetal brain and fetal eye. Expressed at the outer limiting membrane and apical to adherens junctions in the retina.

It localises to the apical cell membrane. Its subcellular location is the secreted. The protein resides in the cell projection. The protein localises to the cilium. It is found in the photoreceptor outer segment. It localises to the photoreceptor inner segment. Its function is as follows. Plays a role in photoreceptor morphogenesis in the retina. May maintain cell polarization and adhesion. The sequence is that of Protein crumbs homolog 1 from Homo sapiens (Human).